Reading from the N-terminus, the 115-residue chain is Large ribosomal subunit protein bL19 (115 aa).

Belongs to the bacterial ribosomal protein bL19 family.

Functionally, this protein is located at the 30S-50S ribosomal subunit interface and may play a role in the structure and function of the aminoacyl-tRNA binding site. This Francisella tularensis subsp. holarctica (strain FTNF002-00 / FTA) protein is Large ribosomal subunit protein bL19.